The primary structure comprises 620 residues: 1-deoxy-D-xylulose-5-phosphate synthase (620 aa).

Residues H80 and G121–S123 contribute to the thiamine diphosphate site. D152 is a binding site for Mg(2+). Residues G153–A154, N181, Y288, and E370 contribute to the thiamine diphosphate site. Residue N181 coordinates Mg(2+).

This sequence belongs to the transketolase family. DXPS subfamily. As to quaternary structure, homodimer. Requires Mg(2+) as cofactor. Thiamine diphosphate is required as a cofactor.

It carries out the reaction D-glyceraldehyde 3-phosphate + pyruvate + H(+) = 1-deoxy-D-xylulose 5-phosphate + CO2. Its pathway is metabolic intermediate biosynthesis; 1-deoxy-D-xylulose 5-phosphate biosynthesis; 1-deoxy-D-xylulose 5-phosphate from D-glyceraldehyde 3-phosphate and pyruvate: step 1/1. Functionally, catalyzes the acyloin condensation reaction between C atoms 2 and 3 of pyruvate and glyceraldehyde 3-phosphate to yield 1-deoxy-D-xylulose-5-phosphate (DXP). In Escherichia coli (strain K12 / MC4100 / BW2952), this protein is 1-deoxy-D-xylulose-5-phosphate synthase.